The following is a 344-amino-acid chain: Phosphate acyltransferase (344 aa).

It belongs to the PlsX family. In terms of assembly, homodimer. Probably interacts with PlsY.

Its subcellular location is the cytoplasm. The catalysed reaction is a fatty acyl-[ACP] + phosphate = an acyl phosphate + holo-[ACP]. It participates in lipid metabolism; phospholipid metabolism. In terms of biological role, catalyzes the reversible formation of acyl-phosphate (acyl-PO(4)) from acyl-[acyl-carrier-protein] (acyl-ACP). This enzyme utilizes acyl-ACP as fatty acyl donor, but not acyl-CoA. The chain is Phosphate acyltransferase from Blochmanniella floridana.